Consider the following 70-residue polypeptide: MKPGIHPEYAQITATCTCGNVIKINSTVGKDLHLDVCGACHPFYTGTQKVVDTGGRIDKFNKRFGMLGKK.

Residues C16, C18, C37, and C40 each coordinate Zn(2+).

Belongs to the bacterial ribosomal protein bL31 family. Type A subfamily. In terms of assembly, part of the 50S ribosomal subunit. It depends on Zn(2+) as a cofactor.

Binds the 23S rRNA. This is Large ribosomal subunit protein bL31 from Shewanella amazonensis (strain ATCC BAA-1098 / SB2B).